We begin with the raw amino-acid sequence, 332 residues long: DNA-directed RNA polymerase subunit alpha (332 aa).

An alpha N-terminal domain (alpha-NTD) region spans residues 1-244 (MKKHAKVYYS…AHLNLLADVE (244 aa)). Residues 259–332 (IKEEPIRRFS…NYKNENKGEN (74 aa)) are alpha C-terminal domain (alpha-CTD).

The protein belongs to the RNA polymerase alpha chain family. In terms of assembly, homodimer. The RNAP catalytic core consists of 2 alpha, 1 beta, 1 beta' and 1 omega subunit. When a sigma factor is associated with the core the holoenzyme is formed, which can initiate transcription.

The enzyme catalyses RNA(n) + a ribonucleoside 5'-triphosphate = RNA(n+1) + diphosphate. Its function is as follows. DNA-dependent RNA polymerase catalyzes the transcription of DNA into RNA using the four ribonucleoside triphosphates as substrates. This Mesomycoplasma hyopneumoniae (strain 7448) (Mycoplasma hyopneumoniae) protein is DNA-directed RNA polymerase subunit alpha.